The chain runs to 231 residues: Antiholin-like protein LrgB (231 aa).

5 consecutive transmembrane segments (helical) span residues 7–24 (PYFG…GTFL), 34–56 (FTPL…FSYA), 91–113 (WWQI…YLLA), 149–171 (ITAF…FLKV), and 207–229 (ASIA…VQLI).

It belongs to the CidB/LrgB family. LrgB subfamily.

The protein localises to the cell membrane. Functionally, inhibits the expression or activity of extracellular murein hydrolases by interacting, possibly with LrgA, with the holin-like protein CidA. The LrgAB and CidA proteins may affect the proton motive force of the membrane. May be involved in programmed cell death (PCD), possibly triggering PCD in response to antibiotics and environmental stresses. This chain is Antiholin-like protein LrgB, found in Bacillus subtilis (strain 168).